The sequence spans 389 residues: Lipid-A-disaccharide synthase (389 aa).

The protein belongs to the LpxB family.

The catalysed reaction is a lipid X + a UDP-2-N,3-O-bis[(3R)-3-hydroxyacyl]-alpha-D-glucosamine = a lipid A disaccharide + UDP + H(+). Its pathway is bacterial outer membrane biogenesis; LPS lipid A biosynthesis. In terms of biological role, condensation of UDP-2,3-diacylglucosamine and 2,3-diacylglucosamine-1-phosphate to form lipid A disaccharide, a precursor of lipid A, a phosphorylated glycolipid that anchors the lipopolysaccharide to the outer membrane of the cell. The protein is Lipid-A-disaccharide synthase of Burkholderia ambifaria (strain ATCC BAA-244 / DSM 16087 / CCUG 44356 / LMG 19182 / AMMD) (Burkholderia cepacia (strain AMMD)).